Here is a 452-residue protein sequence, read N- to C-terminus: GTPase Der (452 aa).

EngA-type G domains follow at residues 9–170 (KIIA…PEED) and 185–362 (LQIV…KTWN). GTP is bound by residues 15-22 (GRPNVGKS), 62-66 (DTPGL), 124-127 (NKCE), 191-198 (GRPNAGKS), 238-242 (DTAGL), and 303-306 (NKWD). The 86-residue stretch at 363 to 448 (KKITTSKLNE…PIRFNYIKTK (86 aa)) folds into the KH-like domain.

The protein belongs to the TRAFAC class TrmE-Era-EngA-EngB-Septin-like GTPase superfamily. EngA (Der) GTPase family. Associates with the 50S ribosomal subunit.

In terms of biological role, GTPase that plays an essential role in the late steps of ribosome biogenesis. The polypeptide is GTPase Der (Rickettsia bellii (strain RML369-C)).